Consider the following 67-residue polypeptide: Protein C' (67 aa).

The protein belongs to the rhabdoviruses C protein family.

In terms of biological role, seems to stimulates transcription by the viral polymerase. May play a role in viral pathogenesis or transmission by insects vectors. The polypeptide is Protein C' (P) (Vesicular stomatitis Indiana virus (strain San Juan) (VSIV)).